We begin with the raw amino-acid sequence, 1448 residues long: Glutamate receptor ionotropic, NMDA 2B (1448 aa).

The N-terminal stretch at 1–24 is a signal peptide; sequence MRPTEACCYLKISLIILFYMGCYA. The Extracellular portion of the chain corresponds to 25-554; sequence QKHPNMDIAV…SAFLEPFSAD (530 aa). A disulfide bond links C81 and C316. 2 residues coordinate Zn(2+): H122 and E279. An N-linked (GlcNAc...) asparagine glycan is attached at N336. 2 cysteine pairs are disulfide-bonded: C426/C453 and C433/C454. The L-glutamate site is built by T511 and R516. A helical membrane pass occupies residues 555–573; it reads VWVMMFVMLLIVSAVAVFV. Residues 574–600 lie on the Cytoplasmic side of the membrane; that stretch reads FEYFSPVGYNRCLADGREPGGPSFTIG. An intramembrane region (discontinuously helical) is located at residues 601–620; the sequence is KAIWLLWGLVFNNSVPVQNP. Residues 601 to 620 are pore-forming; the sequence is KAIWLLWGLVFNNSVPVQNP. Topologically, residues 621-627 are cytoplasmic; the sequence is KGTTSKI. The helical transmembrane segment at 628 to 643 threads the bilayer; sequence MVSVWAFFAVIFLASY. The Extracellular portion of the chain corresponds to 644 to 819; that stretch reads TANLAAFMIQ…LDIDNMAGVF (176 aa). N685 carries N-linked (GlcNAc...) asparagine glycosylation. Residues 687–688 and D729 each bind L-glutamate; that span reads ST. C743 and C798 are disulfide-bonded. Residues 820-839 traverse the membrane as a helical segment; the sequence is YMLAAAMALSLITFIMEHLF. Over 840-1448 the chain is Cytoplasmic; the sequence is FWQLRHCFMG…EKLSSIESDV (609 aa). Positions 1254–1265 are enriched in polar residues; it reads APNSKYPQSPNG. Residues 1254 to 1277 are disordered; sequence APNSKYPQSPNGKAQKRNRSKLHR. Positions 1267–1277 are enriched in basic residues; it reads AQKRNRSKLHR.

The protein belongs to the glutamate-gated ion channel (TC 1.A.10.1) family. NR2B/GRIN2B subfamily. Heterotetramer. Forms heterotetrameric channels composed of two GluN1/zeta subunits (GRIN1), and two identical GluN2/epsilon subunits (GRIN2A, GRIN2B, GRIN2C or GRIN2D) or GluN3 subunits (GRIN3A or GRIN3B) (in vitro). In vivo, the subunit composition may depend on the expression levels of the different subunits. As to expression, detected in oocytes.

It localises to the cell membrane. It is found in the postsynaptic cell membrane. The enzyme catalyses Ca(2+)(in) = Ca(2+)(out). It carries out the reaction Na(+)(in) = Na(+)(out). The catalysed reaction is K(+)(in) = K(+)(out). Its function is as follows. Component of N-methyl-D-aspartate (NMDA) receptors (NMDARs) that function as heterotetrameric, ligand-gated cation channels with high calcium permeability and voltage-dependent block by Mg(2+). Channel activation requires binding of the neurotransmitter L-glutamate to the GluN2 subunit, glycine binding to the GluN1 subunit, plus membrane depolarization to eliminate channel inhibition by Mg(2+). NMDARs mediate simultaneously the potasium efflux and the influx of calcium and sodium. Each GluN2 subunit confers differential attributes to channel properties, including activation, deactivation and desensitization kinetics, pH sensitivity, Ca2(+) permeability, and binding to allosteric modulators. The chain is Glutamate receptor ionotropic, NMDA 2B from Xenopus laevis (African clawed frog).